Consider the following 525-residue polypeptide: Ribosomal protein S6 kinase beta-1 (525 aa).

The TOS motif motif lies at Phe-28–Leu-32. Over residues Leu-32–Glu-46 the composition is skewed to acidic residues. The tract at residues Leu-32–Met-54 is disordered. Residues Phe-91–Phe-352 form the Protein kinase domain. Residues Leu-97–Val-105 and Lys-123 each bind ATP. Asp-218 functions as the Proton acceptor in the catalytic mechanism. A Phosphothreonine; by PDPK1 modification is found at Thr-252. One can recognise an AGC-kinase C-terminal domain in the interval Arg-353 to Lys-423. Residues Ser-380–Thr-399 form a disordered region. A compositionally biased stretch (polar residues) spans Gln-381–Thr-399. Ser-394 bears the Phosphoserine mark. Phosphothreonine; by MTOR, NEK6 and NEK7 is present on Thr-412. Positions Glu-424–Leu-525 are autoinhibitory domain. Phosphoserine occurs at positions 434 and 441. Thr-444 is subject to Phosphothreonine. Residues Ser-447 and Ser-452 each carry the phosphoserine modification. Lys-516 carries the N6-acetyllysine modification.

Belongs to the protein kinase superfamily. AGC Ser/Thr protein kinase family. S6 kinase subfamily. In terms of assembly, interacts with PPP1R9A/neurabin-1. Interacts with RPTOR. Interacts with IRS1. Interacts with EIF3B and EIF3C. Interacts with TRAF4. Interacts with POLDIP3. Interacts (via N-terminus) with IER5. In terms of processing, phosphorylation at Thr-412 is regulated by mTORC1. The phosphorylation at this site is maintained by an agonist-dependent autophosphorylation mechanism. Activated by phosphorylation at Thr-252 by PDPK1. Dephosphorylation by PPP1CC at Thr-412 in mitochondrion.

Its subcellular location is the cytoplasm. The protein resides in the synapse. The protein localises to the synaptosome. It localises to the mitochondrion outer membrane. It is found in the mitochondrion. It carries out the reaction L-seryl-[protein] + ATP = O-phospho-L-seryl-[protein] + ADP + H(+). It catalyses the reaction L-threonyl-[protein] + ATP = O-phospho-L-threonyl-[protein] + ADP + H(+). Activation requires multiple phosphorylation events on serine/threonine residues. Activation appears to be first mediated by phosphorylation of multiple sites in the autoinhibitory domain, which facilitates phosphorylation at Thr-412, disrupting the autoinhibitory mechanism and allowing phosphorylation of Thr-252 by PDPK1. The active conformation of the kinase is believed to be stabilized by a mechanism involving three conserved phosphorylation sites located in the kinase domain activation loop (Thr-252) and in the AGC-kinase C-terminal domain (Ser-394 in the middle of the tail/linker region and Thr-412 within a hydrophobic motif at its end). Activated by mTORC1; isoform Alpha I and isoform Alpha II are sensitive to rapamycin, which inhibits activating phosphorylation at Thr-412. Activated by PDPK1. In terms of biological role, serine/threonine-protein kinase that acts downstream of mTOR signaling in response to growth factors and nutrients to promote cell proliferation, cell growth and cell cycle progression. Regulates protein synthesis through phosphorylation of EIF4B, RPS6 and EEF2K, and contributes to cell survival by repressing the pro-apoptotic function of BAD. Under conditions of nutrient depletion, the inactive form associates with the EIF3 translation initiation complex. Upon mitogenic stimulation, phosphorylation by the mechanistic target of rapamycin complex 1 (mTORC1) leads to dissociation from the EIF3 complex and activation. The active form then phosphorylates and activates several substrates in the pre-initiation complex, including the EIF2B complex and the cap-binding complex component EIF4B. Also controls translation initiation by phosphorylating a negative regulator of EIF4A, PDCD4, targeting it for ubiquitination and subsequent proteolysis. Promotes initiation of the pioneer round of protein synthesis by phosphorylating POLDIP3/SKAR. In response to IGF1, activates translation elongation by phosphorylating EEF2 kinase (EEF2K), which leads to its inhibition and thus activation of EEF2. Also plays a role in feedback regulation of mTORC2 by mTORC1 by phosphorylating MAPKAP1/SIN1, MTOR and RICTOR, resulting in the inhibition of mTORC2 and AKT1 signaling. Also involved in feedback regulation of mTORC1 and mTORC2 by phosphorylating DEPTOR. Mediates cell survival by phosphorylating the pro-apoptotic protein BAD and suppressing its pro-apoptotic function. Phosphorylates mitochondrial URI1 leading to dissociation of a URI1-PPP1CC complex. The free mitochondrial PPP1CC can then dephosphorylate RPS6KB1 at Thr-412, which is proposed to be a negative feedback mechanism for the RPS6KB1 anti-apoptotic function. Mediates TNF-alpha-induced insulin resistance by phosphorylating IRS1 at multiple serine residues, resulting in accelerated degradation of IRS1. In cells lacking functional TSC1-2 complex, constitutively phosphorylates and inhibits GSK3B. May be involved in cytoskeletal rearrangement through binding to neurabin. Phosphorylates and activates the pyrimidine biosynthesis enzyme CAD, downstream of MTOR. Following activation by mTORC1, phosphorylates EPRS and thereby plays a key role in fatty acid uptake by adipocytes and also most probably in interferon-gamma-induced translation inhibition. This is Ribosomal protein S6 kinase beta-1 (Rps6kb1) from Mus musculus (Mouse).